The sequence spans 577 residues: Adenine deaminase (577 aa).

It belongs to the metallo-dependent hydrolases superfamily. Adenine deaminase family. Mn(2+) serves as cofactor.

It catalyses the reaction adenine + H2O + H(+) = hypoxanthine + NH4(+). This chain is Adenine deaminase (adeC), found in Bacillus subtilis (strain 168).